The sequence spans 420 residues: Ribulose bisphosphate carboxylase (420 aa).

The active-site Proton acceptor is Lys155. Position 157 (Lys157) interacts with substrate. Mg(2+) is bound by residues Lys181, Asp183, and Glu184. Lys181 carries the N6-carboxylysine modification. The active-site Proton acceptor is His273. Residues Arg274, His306, 343 to 345 (SGG), and 365 to 368 (QAGG) contribute to the substrate site.

This sequence belongs to the RuBisCO large chain family. Type III subfamily. As to quaternary structure, homodimer or homodecamer. In contrast to form I RuBisCO, the form III RuBisCO is composed solely of large subunits. Requires Mg(2+) as cofactor.

The enzyme catalyses 2 (2R)-3-phosphoglycerate + 2 H(+) = D-ribulose 1,5-bisphosphate + CO2 + H2O. It carries out the reaction D-ribulose 1,5-bisphosphate + O2 = 2-phosphoglycolate + (2R)-3-phosphoglycerate + 2 H(+). In terms of biological role, catalyzes the addition of molecular CO(2) and H(2)O to ribulose 1,5-bisphosphate (RuBP), generating two molecules of 3-phosphoglycerate (3-PGA). Functions in an archaeal AMP degradation pathway, together with AMP phosphorylase and R15P isomerase. The protein is Ribulose bisphosphate carboxylase of Pyrococcus furiosus (strain ATCC 43587 / DSM 3638 / JCM 8422 / Vc1).